A 503-amino-acid polypeptide reads, in one-letter code: Maturase K (503 aa).

The protein belongs to the intron maturase 2 family. MatK subfamily.

The protein localises to the plastid. Its subcellular location is the chloroplast. Usually encoded in the trnK tRNA gene intron. Probably assists in splicing its own and other chloroplast group II introns. The sequence is that of Maturase K from Panax ginseng (Korean ginseng).